Reading from the N-terminus, the 1251-residue chain is Topoisomerase 1-associated factor 1 (1251 aa).

Disordered stretches follow at residues 328–354 (ERKM…KDLG), 564–601 (RRKK…KTSQ), 901–1021 (RRKT…YEGN), and 1041–1251 (ATFG…SDEE). Positions 344 to 354 (RKEDMEPKDLG) are enriched in basic and acidic residues. Residues 576-591 (QGDDEGQGDAEDDSAD) show a composition bias toward acidic residues. 2 stretches are compositionally biased toward basic and acidic residues: residues 592-601 (DERQAEKTSQ) and 985-1011 (AEAR…YVDP). 2 stretches are compositionally biased toward acidic residues: residues 1069 to 1079 (DGDDGEGEDAV) and 1103 to 1122 (GGED…EEDG). Over residues 1123–1136 (SAVSEAEAPAAAGR) the composition is skewed to low complexity. Residues 1137-1151 (RPNKRRKPAQKKKKR) show a composition bias toward basic residues. Residues 1157–1179 (SGEDDDVGMDMDVDVDADADADA) show a composition bias toward acidic residues. Over residues 1182–1205 (FTQSSKDGAVTNDTPLSSDPSRTT) the composition is skewed to polar residues.

This sequence belongs to the timeless family. As to quaternary structure, component of the fork protection complex (FPC) consisting of TOF1 and CSM3.

It is found in the nucleus. Functionally, forms a fork protection complex (FPC) with CSM3 and which is required for chromosome segregation during meiosis and DNA damage repair. FPC coordinates leading and lagging strand synthesis and moves with the replication fork. FPC stabilizes replication forks in a configuration that is recognized by replication checkpoint sensors. This is Topoisomerase 1-associated factor 1 (TOF1) from Chaetomium globosum (strain ATCC 6205 / CBS 148.51 / DSM 1962 / NBRC 6347 / NRRL 1970) (Soil fungus).